We begin with the raw amino-acid sequence, 336 residues long: Ketol-acid reductoisomerase (NADP(+)) (336 aa).

Residues 5 to 185 (SKIYTDKDSN…GATRAGVIPT (181 aa)) form the KARI N-terminal Rossmann domain. NADP(+)-binding positions include 28 to 31 (YGSQ), Ser56, and 86 to 89 (DMVQ). The active site involves His111. Gly137 lines the NADP(+) pocket. One can recognise a KARI C-terminal knotted domain in the interval 186-331 (TFKEETETDL…NQLKDLIQKG (146 aa)). Positions 194, 198, 230, and 234 each coordinate Mg(2+). Ser255 provides a ligand contact to substrate.

Belongs to the ketol-acid reductoisomerase family. Mg(2+) is required as a cofactor.

It catalyses the reaction (2R)-2,3-dihydroxy-3-methylbutanoate + NADP(+) = (2S)-2-acetolactate + NADPH + H(+). The catalysed reaction is (2R,3R)-2,3-dihydroxy-3-methylpentanoate + NADP(+) = (S)-2-ethyl-2-hydroxy-3-oxobutanoate + NADPH + H(+). The protein operates within amino-acid biosynthesis; L-isoleucine biosynthesis; L-isoleucine from 2-oxobutanoate: step 2/4. Its pathway is amino-acid biosynthesis; L-valine biosynthesis; L-valine from pyruvate: step 2/4. In terms of biological role, involved in the biosynthesis of branched-chain amino acids (BCAA). Catalyzes an alkyl-migration followed by a ketol-acid reduction of (S)-2-acetolactate (S2AL) to yield (R)-2,3-dihydroxy-isovalerate. In the isomerase reaction, S2AL is rearranged via a Mg-dependent methyl migration to produce 3-hydroxy-3-methyl-2-ketobutyrate (HMKB). In the reductase reaction, this 2-ketoacid undergoes a metal-dependent reduction by NADPH to yield (R)-2,3-dihydroxy-isovalerate. The chain is Ketol-acid reductoisomerase (NADP(+)) from Saccharolobus islandicus (strain Y.N.15.51 / Yellowstone #2) (Sulfolobus islandicus).